An 899-amino-acid polypeptide reads, in one-letter code: Plasma membrane ATPase (899 aa).

The tract at residues M1 to D72 is disordered. The Cytoplasmic portion of the chain corresponds to M1–K96. Residues D17–I29 show a composition bias toward acidic residues. Residues F97–A117 traverse the membrane as a helical segment. At G118–D121 the chain is on the extracellular side. A helical membrane pass occupies residues W122–I141. Over Q142 to N272 the chain is Cytoplasmic. The helical transmembrane segment at G273–F294 threads the bilayer. Residues Y295–R305 lie on the Extracellular side of the membrane. Residues Y306–A328 traverse the membrane as a helical segment. Over V329 to I700 the chain is Cytoplasmic. The active-site 4-aspartylphosphate intermediate is D359. Residues D615 and D619 each contribute to the Mg(2+) site. The chain crosses the membrane as a helical span at residues D701–Y719. Residues D720–R735 lie on the Extracellular side of the membrane. The helical transmembrane segment at L736–L755 threads the bilayer. Topologically, residues T756 to Q805 are cytoplasmic. The chain crosses the membrane as a helical span at residues L806–W826. Residues S827–R838 lie on the Extracellular side of the membrane. Residues V839–Y855 traverse the membrane as a helical segment. Topologically, residues M856–N899 are cytoplasmic.

The protein belongs to the cation transport ATPase (P-type) (TC 3.A.3) family. Type IIIA subfamily.

The protein localises to the cell membrane. The enzyme catalyses ATP + H2O + H(+)(in) = ADP + phosphate + 2 H(+)(out). Activated by high pH or also by potassium ions when the medium pH is low. In terms of biological role, the plasma membrane ATPase of plants and fungi is a hydrogen ion pump. The proton gradient it generates drives the active transport of nutrients by H(+)-symport. The resulting external acidification and/or internal alkinization may mediate growth responses. In Kluyveromyces lactis (strain ATCC 8585 / CBS 2359 / DSM 70799 / NBRC 1267 / NRRL Y-1140 / WM37) (Yeast), this protein is Plasma membrane ATPase (PMA1).